We begin with the raw amino-acid sequence, 326 residues long: Phosphate acyltransferase (326 aa).

It belongs to the PlsX family. As to quaternary structure, homodimer. Probably interacts with PlsY.

The protein resides in the cytoplasm. The catalysed reaction is a fatty acyl-[ACP] + phosphate = an acyl phosphate + holo-[ACP]. It functions in the pathway lipid metabolism; phospholipid metabolism. In terms of biological role, catalyzes the reversible formation of acyl-phosphate (acyl-PO(4)) from acyl-[acyl-carrier-protein] (acyl-ACP). This enzyme utilizes acyl-ACP as fatty acyl donor, but not acyl-CoA. The protein is Phosphate acyltransferase of Macrococcus caseolyticus (strain JCSC5402) (Macrococcoides caseolyticum).